The following is a 108-amino-acid chain: Evasin P1229 (108 aa).

An N-terminal signal peptide occupies residues 1–31 (MEVRTFAFLQIVVFVALGIQLFAAVTDAADA). Cystine bridges form between cysteine 41–cysteine 63, cysteine 45–cysteine 65, and cysteine 56–cysteine 76. N-linked (GlcNAc...) asparagine glycosylation is present at asparagine 44. The disordered stretch occupies residues 88-108 (GDPNNSDLDAATPRHPDASSR). Asparagine 91 carries N-linked (GlcNAc...) asparagine glycosylation. The segment covering 99-108 (TPRHPDASSR) has biased composition (basic and acidic residues).

The protein localises to the secreted. Its function is as follows. Salivary chemokine-binding protein which binds to host chemokines CXCL1 and CXCL8. In Ixodes ricinus (Common tick), this protein is Evasin P1229.